Here is a 405-residue protein sequence, read N- to C-terminus: Na(+)/H(+) antiporter NhaA 1 (405 aa).

The next 11 membrane-spanning stretches (helical) occupy residues 20 to 40, 68 to 88, 105 to 125, 134 to 154, 163 to 183, 186 to 206, 214 to 234, 263 to 283, 301 to 321, 334 to 354, and 371 to 391; these read FVSDASAGILLILVAAAAMIV, LHLWINDGLMAIFFFVVGLEV, LPVLAAIAGMAVPAIVYVGVV, GWAIPAATDIAFAMGVLGLLG, LFLLTVAIVDDIGAVLVIAAF, ANLKVMWLVIALGIFGVMVGM, IWPYILVALVLWVAVLFSGVH, GLAPWSAYLVVPIFGFANAGV, IAAGLVVGKQLGIFGIIVAAV, WIEIWGVSILTGIGFTMSLFI, and IGILGGSLISAILGYTILRLT.

It belongs to the NhaA Na(+)/H(+) (TC 2.A.33) antiporter family.

It is found in the cell inner membrane. It catalyses the reaction Na(+)(in) + 2 H(+)(out) = Na(+)(out) + 2 H(+)(in). In terms of biological role, na(+)/H(+) antiporter that extrudes sodium in exchange for external protons. The protein is Na(+)/H(+) antiporter NhaA 1 of Erythrobacter litoralis (strain HTCC2594).